Consider the following 187-residue polypeptide: Nicotinamide-nucleotide adenylyltransferase (187 aa).

The protein belongs to the archaeal NMN adenylyltransferase family.

The protein localises to the cytoplasm. The catalysed reaction is beta-nicotinamide D-ribonucleotide + ATP + H(+) = diphosphate + NAD(+). Its pathway is cofactor biosynthesis; NAD(+) biosynthesis; NAD(+) from nicotinamide D-ribonucleotide: step 1/1. This Thermococcus onnurineus (strain NA1) protein is Nicotinamide-nucleotide adenylyltransferase.